The primary structure comprises 142 residues: FAD synthase (142 aa).

Residues 9–10, 14–17, Asp-93, and Tyr-120 each bind ATP; these read VF and HLGH.

Belongs to the archaeal FAD synthase family. Homodimer. It depends on a divalent metal cation as a cofactor.

It catalyses the reaction FMN + ATP + H(+) = FAD + diphosphate. Its pathway is cofactor biosynthesis; FAD biosynthesis; FAD from FMN: step 1/1. In terms of biological role, catalyzes the transfer of the AMP portion of ATP to flavin mononucleotide (FMN) to produce flavin adenine dinucleotide (FAD) coenzyme. The sequence is that of FAD synthase from Thermoplasma acidophilum (strain ATCC 25905 / DSM 1728 / JCM 9062 / NBRC 15155 / AMRC-C165).